Consider the following 298-residue polypeptide: U1 small nuclear ribonucleoprotein A (298 aa).

RRM domains follow at residues 2–113 (SALY…KART) and 227–298 (KVLL…GFAK).

It belongs to the RRM U1 A/B'' family. Component of the spliceosome where it is associated with snRNP U1.

The protein localises to the nucleus. In terms of biological role, involved in nuclear mRNA splicing. The principal role of the U1A is to help fold or maintain U1 RNA in an active configuration. It is the first snRNP to interact with pre-mRNA. This interaction is required for the subsequent binding of U2 snRNP and the U4/U6/U5 tri-snRNP. The sequence is that of U1 small nuclear ribonucleoprotein A (MUD1) from Saccharomyces cerevisiae (strain ATCC 204508 / S288c) (Baker's yeast).